Consider the following 179-residue polypeptide: MKTMFLLALLAFTATSAVAQLYTTCSQGYGQCQQQPQPQPQPQPQMNTCAAFLQQCIQTPYVQSQMWQASGCQLMRQQCCQPLAQISEQARCQAVCSVSQIIMRQQQGQRFGQPQQQQGQSFGQPQQQVPVEIMRMVLQTLPSMCSVNIPQYCTTTPCSTITPAIYSIPMTATCAGGAC.

The first 19 residues, 1–19 (MKTMFLLALLAFTATSAVA), serve as a signal peptide directing secretion.

This sequence belongs to the prolamin family. In terms of processing, contains 7 disulfide bonds.

Functionally, seed storage protein. Not integrated in the gluten polymer through disulfide bonds, unless incorporated by reduction and reoxidation during dough making. Increases dough strength and bread volume, but decreases dough stability when added into a base wheat flour. The chain is Avenin-like a2 from Triticum aestivum (Wheat).